The following is a 284-amino-acid chain: Bifunctional protein FolD (284 aa).

Residues 165-167 (GRS), Ser190, and Val231 contribute to the NADP(+) site.

It belongs to the tetrahydrofolate dehydrogenase/cyclohydrolase family. As to quaternary structure, homodimer.

It carries out the reaction (6R)-5,10-methylene-5,6,7,8-tetrahydrofolate + NADP(+) = (6R)-5,10-methenyltetrahydrofolate + NADPH. It catalyses the reaction (6R)-5,10-methenyltetrahydrofolate + H2O = (6R)-10-formyltetrahydrofolate + H(+). It functions in the pathway one-carbon metabolism; tetrahydrofolate interconversion. Catalyzes the oxidation of 5,10-methylenetetrahydrofolate to 5,10-methenyltetrahydrofolate and then the hydrolysis of 5,10-methenyltetrahydrofolate to 10-formyltetrahydrofolate. The chain is Bifunctional protein FolD from Natranaerobius thermophilus (strain ATCC BAA-1301 / DSM 18059 / JW/NM-WN-LF).